The chain runs to 600 residues: Alpha-N-acetylgalactosaminide alpha-2,6-sialyltransferase 1 (600 aa).

The Cytoplasmic segment spans residues Met-1–Gly-14. Residues Val-15–Ile-35 form a helical; Signal-anchor for type II membrane protein membrane-spanning segment. Topologically, residues Lys-36–Asn-600 are lumenal. 2 disordered regions span residues Pro-38–Thr-191 and Gly-208–Asn-248. Basic and acidic residues predominate over residues Gln-46–Ser-55. Composition is skewed to polar residues over residues Asn-84–Ala-94, Thr-151–Thr-179, and Ala-209–Val-219. Cystine bridges form between Cys-279/Cys-362 and Cys-365/Cys-533. Residues Asn-300, Asn-311, Asn-331, Asn-375, and Asn-460 are each glycosylated (N-linked (GlcNAc...) asparagine).

Belongs to the glycosyltransferase 29 family. Post-translationally, glycosylated; autosialylated. In terms of tissue distribution, expression is restricted to the gastrointestinal tract. Highly expressed in goblet cells. Also expressed in various tumor cells.

It is found in the golgi apparatus membrane. It catalyses the reaction a beta-D-galactosyl-(1-&gt;3)-N-acetyl-alpha-D-galactosaminyl derivative + CMP-N-acetyl-beta-neuraminate = a beta-D-galactosyl-(1-&gt;3)-[N-acetyl-alpha-neuraminyl-(2-&gt;6)]-N-acetyl-alpha-D-galactosaminyl derivative + CMP + H(+). The enzyme catalyses a 3-O-[N-acetyl-alpha-D-galactosaminyl]-L-seryl-[protein] + CMP-N-acetyl-beta-neuraminate = a 3-O-[N-acetyl-alpha-neuraminosyl-(2-&gt;6)-N-acetyl-alpha-D-galactosaminyl]-L-seryl-[protein] + CMP + H(+). The catalysed reaction is a 3-O-[N-acetyl-alpha-D-galactosaminyl]-L-threonyl-[protein] + CMP-N-acetyl-beta-neuraminate = a 3-O-[N-acetyl-alpha-neuraminosyl-(2-&gt;6)-N-acetyl-alpha-D-galactosaminyl]-L-threonyl-[protein] + CMP + H(+). It carries out the reaction a 3-O-[beta-D-galactosyl-(1-&gt;3)-N-acetyl-alpha-D-galactosaminyl]-L-seryl-[protein] + CMP-N-acetyl-beta-neuraminate = a 3-O-{beta-D-galactosyl-(1-&gt;3)-[N-acetyl-alpha-neuraminosyl-(2-&gt;6)]-N-acetyl-alpha-D-galactosaminyl}-L-seryl-[protein] + CMP + H(+). It catalyses the reaction a 3-O-[beta-D-galactosyl-(1-&gt;3)-N-acetyl-alpha-D-galactosaminyl]-L-threonyl-[protein] + CMP-N-acetyl-beta-neuraminate = a 3-O-{beta-D-galactosyl-(1-&gt;3)-[N-acetyl-alpha-neuraminosyl-(2-&gt;6)]-N-acetyl-alpha-D-galactosaminyl}-L-threonyl-[protein] + CMP + H(+). The enzyme catalyses a 3-O-[N-acetyl-alpha-neuraminyl-(2-&gt;3)-beta-D-galactosyl-(1-&gt;3)-N-acetyl-alpha-D-galactosaminyl]-L-threonyl-[protein] + CMP-N-acetyl-beta-neuraminate = a 3-O-{alpha-Neu5Ac-(2-&gt;3)-beta-D-Gal-(1-&gt;3)-[alpha-Neu5Ac-(2-&gt;6)]-alpha-D-GalNAc}-L-threonyl-[protein] + CMP + H(+). Its pathway is protein modification; protein glycosylation. Protein sialyltransferase specifically expressed in goblet cells that plays a key role in intestinal host-commensal homeostasis. Conjugates sialic acid with an alpha-2-6 linkage to N-acetylgalactosamine (GalNAc) glycan chains linked to serine or threonine in glycoproteins. Catalyzes the formation of the sialyl-Tn (S-Tn) antigen, an antigen found in intestinal goblet cells, as well as ulcerative colitis (UC) and various cancers. Protein sialylation in globlet cells is essential for mucus integrity and is required to protect the intestinal mucus against excessive bacterial proteolytic degradation. The chain is Alpha-N-acetylgalactosaminide alpha-2,6-sialyltransferase 1 from Homo sapiens (Human).